The sequence spans 160 residues: GTP-dependent dephospho-CoA kinase (160 aa).

GTP-binding residues include Asp-45, Ile-46, Val-47, Asp-59, Lys-61, Glu-108, and Asp-130.

Belongs to the GTP-dependent DPCK family.

The catalysed reaction is 3'-dephospho-CoA + GTP = GDP + CoA + H(+). The protein operates within cofactor biosynthesis; coenzyme A biosynthesis. Catalyzes the GTP-dependent phosphorylation of the 3'-hydroxyl group of dephosphocoenzyme A to form coenzyme A (CoA). This Staphylothermus marinus (strain ATCC 43588 / DSM 3639 / JCM 9404 / F1) protein is GTP-dependent dephospho-CoA kinase.